We begin with the raw amino-acid sequence, 137 residues long: Small ribosomal subunit protein uS9 (137 aa).

The interval 103 to 137 (PPLKAEGYLTRDPRAKERKKYGLHKARKAPQYSKR) is disordered. A compositionally biased stretch (basic residues) spans 118-137 (KERKKYGLHKARKAPQYSKR).

This sequence belongs to the universal ribosomal protein uS9 family.

This chain is Small ribosomal subunit protein uS9, found in Crocosphaera subtropica (strain ATCC 51142 / BH68) (Cyanothece sp. (strain ATCC 51142)).